The following is a 126-amino-acid chain: Protein ApaG (126 aa).

Positions Ser2–His126 constitute an ApaG domain.

The chain is Protein ApaG from Shewanella sp. (strain W3-18-1).